Consider the following 80-residue polypeptide: Small ribosomal subunit protein uS17 (80 aa).

The protein belongs to the universal ribosomal protein uS17 family. Part of the 30S ribosomal subunit.

Its function is as follows. One of the primary rRNA binding proteins, it binds specifically to the 5'-end of 16S ribosomal RNA. The chain is Small ribosomal subunit protein uS17 from Microcystis aeruginosa (strain NIES-843 / IAM M-2473).